A 114-amino-acid chain; its full sequence is Nucleoid-associated protein THEYE_A1069 (114 aa).

It belongs to the YbaB/EbfC family. As to quaternary structure, homodimer.

The protein localises to the cytoplasm. Its subcellular location is the nucleoid. In terms of biological role, binds to DNA and alters its conformation. May be involved in regulation of gene expression, nucleoid organization and DNA protection. The polypeptide is Nucleoid-associated protein THEYE_A1069 (Thermodesulfovibrio yellowstonii (strain ATCC 51303 / DSM 11347 / YP87)).